The primary structure comprises 562 residues: DNA ligase (562 aa).

E252 serves as a coordination point for ATP. Residue K254 is the N6-AMP-lysine intermediate of the active site. ATP contacts are provided by R259, R274, E303, F343, R419, and K425.

Belongs to the ATP-dependent DNA ligase family. It depends on Mg(2+) as a cofactor.

The enzyme catalyses ATP + (deoxyribonucleotide)n-3'-hydroxyl + 5'-phospho-(deoxyribonucleotide)m = (deoxyribonucleotide)n+m + AMP + diphosphate.. Functionally, DNA ligase that seals nicks in double-stranded DNA during DNA replication, DNA recombination and DNA repair. This is DNA ligase from Methanococcus aeolicus (strain ATCC BAA-1280 / DSM 17508 / OCM 812 / Nankai-3).